The following is a 147-amino-acid chain: Echinoidin (147 aa).

Residues 1–143 (GCCPTFWTSF…STRHYLICKL (143 aa)) form the C-type lectin domain. 3 disulfide bridges follow: C3-C14, C31-C141, and C116-C132. S38 is a glycosylation site (O-linked (Hex) serine). Positions 39-41 (RGD) match the Cell attachment site motif.

As to quaternary structure, homodimer; disulfide-linked. Post-translationally, the identity of the saccharide is not reported in PubMed:3571253, and it is unlikely to be N-acetylgalactosamine. The sugar attached to Ser-38 is represented simply as Hex. In terms of tissue distribution, coelemic fluid.

The protein resides in the secreted. Role in the defense system of the organism against microorganisms. This lectin is specific for Gal-GalNAc. The protein is Echinoidin of Heliocidaris crassispina (Sea urchin).